We begin with the raw amino-acid sequence, 228 residues long: Histidine decarboxylase (228 aa).

Residue His30 coordinates substrate. The residue at position 143 (Lys143) is an N6-(pyridoxal phosphate)lysine.

It belongs to the group II decarboxylase family. As to quaternary structure, homotetramer. Pyridoxal 5'-phosphate is required as a cofactor.

It catalyses the reaction L-histidine + H(+) = histamine + CO2. This Raoultella ornithinolytica (Klebsiella ornithinolytica) protein is Histidine decarboxylase (hdc).